Reading from the N-terminus, the 113-residue chain is Nucleoid-associated protein CLH_3225 (113 aa).

Positions 1–14 are enriched in gly residues; that stretch reads MAKGGFPGGFGGGN. Positions 1-31 are disordered; that stretch reads MAKGGFPGGFGGGNMNNLMKQAQKLQKQMED.

It belongs to the YbaB/EbfC family. In terms of assembly, homodimer.

Its subcellular location is the cytoplasm. The protein localises to the nucleoid. Functionally, binds to DNA and alters its conformation. May be involved in regulation of gene expression, nucleoid organization and DNA protection. This is Nucleoid-associated protein CLH_3225 from Clostridium botulinum (strain Alaska E43 / Type E3).